A 129-amino-acid polypeptide reads, in one-letter code: Small ribosomal subunit protein uS9 (129 aa).

Belongs to the universal ribosomal protein uS9 family.

In Nitratiruptor sp. (strain SB155-2), this protein is Small ribosomal subunit protein uS9.